The chain runs to 433 residues: Pectinesterase B (433 aa).

The first 21 residues, 1 to 21, serve as a signal peptide directing secretion; the sequence is MSLTHYSGLAAAVSMSLILTA. C22 carries N-palmitoyl cysteine lipidation. The S-diacylglycerol cysteine moiety is linked to residue C22. Over 22–433 the chain is Periplasmic; that stretch reads CGGQTPNSAR…EYNTQVLLHE (412 aa). Residues T202 and Q236 each contribute to the substrate site. Catalysis depends on D259, which acts as the Proton donor. The active-site Nucleophile is the D292. 2 residues coordinate substrate: R356 and W358.

Belongs to the pectinesterase family.

It is found in the cell outer membrane. The catalysed reaction is [(1-&gt;4)-alpha-D-galacturonosyl methyl ester](n) + n H2O = [(1-&gt;4)-alpha-D-galacturonosyl](n) + n methanol + n H(+). Its pathway is glycan metabolism; pectin degradation; 2-dehydro-3-deoxy-D-gluconate from pectin: step 1/5. In terms of biological role, probably involved in the degradation of methylated oligogalacturonides present in the periplasm. More active on methylated oligogalacturides than on pectin. This Dickeya dadantii (strain 3937) (Erwinia chrysanthemi (strain 3937)) protein is Pectinesterase B.